Reading from the N-terminus, the 86-residue chain is Small ribosomal subunit protein bS16 (86 aa).

It belongs to the bacterial ribosomal protein bS16 family.

This chain is Small ribosomal subunit protein bS16, found in Acidithiobacillus ferrooxidans (strain ATCC 23270 / DSM 14882 / CIP 104768 / NCIMB 8455) (Ferrobacillus ferrooxidans (strain ATCC 23270)).